The following is a 780-amino-acid chain: Cullin-5 (780 aa).

The residue at position 34 (Ser-34) is a Phosphoserine. Thr-210 carries the phosphothreonine modification. In terms of domain architecture, Cullin neddylation spans 711 to 772 (RILRTQEAII…HKYIRRDEAD (62 aa)). A Glycyl lysine isopeptide (Lys-Gly) (interchain with G-Cter in NEDD8) cross-link involves residue Lys-724.

This sequence belongs to the cullin family. Component of multiple cullin-5-RING E3 ubiquitin-protein ligase complexes (ECS complexes, also named CRL5 complexes) formed of CUL5, Elongin BC (ELOB and ELOC), RNF7/RBX2 and a variable SOCS box domain-containing protein as substrate-specific recognition component. CUL5-containing ECS complexes specifically contain RNF7/RBX2, and not RBX1, as catalytic subunit. Component of the ECS(ASB2) complex with the substrate recognition component ASB2. Component of the ECS(ASB6) complex with the substrate recognition component ASB6. Component of the ECS(ASB7) complex with the substrate recognition component ASB7. Component of the ECS(ASB9) complex with the substrate recognition component ASB9. Component of the ECS(ASB11) complex with the substrate recognition component ASB11. Component of the ECS(ASB12) complex with the substrate recognition component ASB12. Component of the ECS(LRRC41) complex with the substrate recognition component LRRC41. Component of the ECS(SOCS1) complex with the substrate recognition component SOCS1. Component of the ECS(SOCS2) complex with the substrate recognition component SOCS2. Component of the ECS(WSB1) complex with the substrate recognition subunit WSB1. Component of the ECS(SOCS3) complex with the substrate recognition component SOCS3. Component of the ECS(SOCS7) complex with the substrate recognition component SOCS7. Component of the ECS(SPSB1) complex with the substrate recognition component SPSB1. Component of the ECS(SPSB3) complex with the substrate recognition component SPSB3. Component of the ECS(SPSB2) complex with the substrate recognition component SPSB2. Component of the ECS(SPSB4) complex with the substrate recognition component SPSB4. Component of the ECS(RAB40) complex with the substrate recognition subunit RAB40A, RAB40B or RAB40C. Component of the ECS(KLHDC1) complex with the substrate recognition component KLHDC1. Component of the ECS(PCMTD1) complex with the substrate recognition subunit PCMTD1. May also form complexes containing RBX1 and ELOA or VHL; additional evidence is however required to confirm this result in vivo. Interacts (when neddylated) with ARIH2; leading to activate the E3 ligase activity of ARIH2. Interacts with ERCC6; the interaction is induced by DNA damaging agents or inhibitors of RNA polymerase II elongation. Interacts with ELOA (via the BC-box). Interacts (unneddylated form) with DCUN1D1, DCUN1D2, DCUN1D3, DCUN1D4 and DCUN1D5; these interactions promote the cullin neddylation. Neddylated; which enhances the ubiquitination activity of ECS complexes and prevents binding of the inhibitor CAND1. Deneddylated via its interaction with the COP9 signalosome (CSN).

It is found in the nucleus. It participates in protein modification; protein ubiquitination. Core component of multiple cullin-5-RING E3 ubiquitin-protein ligase complexes (ECS complexes, also named CRL5 complexes), which mediate the ubiquitination and subsequent proteasomal degradation of target proteins. Acts a scaffold protein that contributes to catalysis through positioning of the substrate and the ubiquitin-conjugating enzyme. The functional specificity of the E3 ubiquitin-protein ligase complex depends on the variable SOCS box-containing substrate recognition component. Acts as a key regulator of neuron positioning during cortex development: component of various SOCS-containing ECS complexes, such as the ECS(SOCS7) complex, that regulate reelin signaling by mediating ubiquitination and degradation of DAB1. ECS(SOCS1) seems to direct ubiquitination of JAK2. The ECS(SOCS2) complex mediates the ubiquitination and subsequent proteasomal degradation of phosphorylated EPOR and GHR. The ECS(SPSB3) complex catalyzes ubiquitination of nuclear CGAS. ECS(KLHDC1) complex is part of the DesCEND (destruction via C-end degrons) pathway and mediates ubiquitination and degradation of truncated SELENOS selenoprotein produced by failed UGA/Sec decoding, which ends with a glycine. The ECS(ASB9) complex mediates ubiquitination and degradation of CKB. As part of some ECS complex, promotes 'Lys-11'-linked ubiquitination and degradation of BTRC. As part of a multisubunit ECS complex, polyubiquitinates monoubiquitinated POLR2A. As part of the ECS(RAB40C) complex, mediates ANKRD28 ubiquitination and degradation, thereby regulating protein phosphatase 6 (PP6) complex activity and focal adhesion assembly during cell migration. As part of the ECS(RAB40A) complex, mediates RHOU 'Lys-48'-linked ubiquitination and degradation, thus inhibiting focal adhesion disassembly during cell migration. As part of the ECS(RAB40B) complex, mediates LIMA1/EPLIN and RAP2 ubiquitination, thereby regulating actin cytoskeleton dynamics and stress fiber formation during cell migration. May form a cell surface vasopressin receptor. The sequence is that of Cullin-5 from Rattus norvegicus (Rat).